A 99-amino-acid chain; its full sequence is Small ribosomal subunit protein bS20 (99 aa).

Belongs to the bacterial ribosomal protein bS20 family.

Its function is as follows. Binds directly to 16S ribosomal RNA. The sequence is that of Small ribosomal subunit protein bS20 from Caldicellulosiruptor bescii (strain ATCC BAA-1888 / DSM 6725 / KCTC 15123 / Z-1320) (Anaerocellum thermophilum).